The sequence spans 931 residues: Dual serine/threonine and tyrosine protein kinase (931 aa).

The tract at residues 1–24 (MEGDAPQRVSERVSGPGPGGGGGG) is disordered. Positions 397-424 (RKKENELYESLMNIANRKQEEMKDMICE) form a coiled coil. One can recognise a Protein kinase domain in the interval 654-908 (PKLGQELGRG…PLLGIVQPML (255 aa)). ATP contacts are provided by residues 660 to 668 (LGRGQYGVV) and Lys683. Asp779 functions as the Proton acceptor in the catalytic mechanism.

It belongs to the protein kinase superfamily. Ser/Thr protein kinase family.

It localises to the cytoplasm. Its subcellular location is the cell membrane. The protein resides in the apical cell membrane. It is found in the basolateral cell membrane. The protein localises to the cell junction. The catalysed reaction is L-seryl-[protein] + ATP = O-phospho-L-seryl-[protein] + ADP + H(+). It carries out the reaction L-threonyl-[protein] + ATP = O-phospho-L-threonyl-[protein] + ADP + H(+). It catalyses the reaction L-tyrosyl-[protein] + ATP = O-phospho-L-tyrosyl-[protein] + ADP + H(+). Its function is as follows. Acts as a positive regulator of ERK phosphorylation downstream of fibroblast growth factor-receptor activation. Involved in the regulation of both caspase-dependent apoptosis and caspase-independent cell death. In the skin, it plays a predominant role in suppressing caspase-dependent apoptosis in response to UV stress in a range of dermal cell types. This Canis lupus familiaris (Dog) protein is Dual serine/threonine and tyrosine protein kinase (DSTYK).